The sequence spans 296 residues: MNGIALLIGLGPLLGWGLFPTIASKIGGKPVNQIIGTTFGTFIFALVYNLVQGIALPSGAALIWSIISGIGWASAQILTFHSFTLVGSSRAMPITTAFQLLGTSLWGVFALGDWPSTSDKLVGFLALALIILGAWMTTWSEHKTDENSAKLRKAVIILLVGEIGYWAYSAAPQAAKIDGSKAFLPQAIGMCLVAICYAVYLKVKEPSQRSALAQGVSYKQIISGFFFAFAALTYLISAQPNMNGLATGFILSQTSVVLATLTGIWFLHEKKTKKEMVVTLIGLAIIIGAATMTVIV.

Transmembrane regions (helical) follow at residues 2–24 (NGIA…TIAS), 34–51 (IIGT…YNLV), 58–80 (SGAA…ILTF), 90–112 (RAMP…FALG), 121–139 (LVGF…MTTW), 182–201 (AFLP…AVYL), 221–240 (IISG…SAQP), 245–267 (LATG…IWFL), and 276–295 (MVVT…MTVI).

This sequence belongs to the GRP transporter (TC 2.A.7.5) family.

The protein localises to the cell membrane. In terms of biological role, could be involved in the uptake of ribose. The chain is Putative ribose uptake protein RbsU (rbsU) from Lactobacillus johnsonii (strain CNCM I-12250 / La1 / NCC 533).